The primary structure comprises 155 residues: Ribosomal RNA large subunit methyltransferase H (155 aa).

Residues leucine 72, glycine 104, and 123–128 contribute to the S-adenosyl-L-methionine site; that span reads LSKMTF.

Belongs to the RNA methyltransferase RlmH family. Homodimer.

Its subcellular location is the cytoplasm. It carries out the reaction pseudouridine(1915) in 23S rRNA + S-adenosyl-L-methionine = N(3)-methylpseudouridine(1915) in 23S rRNA + S-adenosyl-L-homocysteine + H(+). Functionally, specifically methylates the pseudouridine at position 1915 (m3Psi1915) in 23S rRNA. The chain is Ribosomal RNA large subunit methyltransferase H from Cytophaga hutchinsonii (strain ATCC 33406 / DSM 1761 / CIP 103989 / NBRC 15051 / NCIMB 9469 / D465).